We begin with the raw amino-acid sequence, 309 residues long: Oxidoreductase NAD-binding domain-containing protein 1 (309 aa).

The signal sequence occupies residues M1–G14. The 115-residue stretch at H47–K161 folds into the FAD-binding FR-type domain. Residue G175–P180 participates in NAD(+) binding.

This is Oxidoreductase NAD-binding domain-containing protein 1 (OXNAD1) from Bos taurus (Bovine).